Reading from the N-terminus, the 132-residue chain is ATP synthase epsilon chain (132 aa).

Belongs to the ATPase epsilon chain family. As to quaternary structure, F-type ATPases have 2 components, CF(1) - the catalytic core - and CF(0) - the membrane proton channel. CF(1) has five subunits: alpha(3), beta(3), gamma(1), delta(1), epsilon(1). CF(0) has three main subunits: a, b and c.

It is found in the cell inner membrane. Produces ATP from ADP in the presence of a proton gradient across the membrane. The chain is ATP synthase epsilon chain from Anaeromyxobacter dehalogenans (strain 2CP-1 / ATCC BAA-258).